The primary structure comprises 273 residues: (5R)-carbapenem-3-carboxylate synthase (273 aa).

Residues histidine 101 and aspartate 103 each contribute to the Fe cation site. Glycine 104 lines the substrate pocket. 2-oxoglutarate is bound at residue threonine 130. Histidine 251 provides a ligand contact to Fe cation. Positions 253, 263, and 267 each coordinate 2-oxoglutarate.

This sequence belongs to the TfdA dioxygenase family. As to quaternary structure, homohexamer. Dimer of trimers. Fe(2+) serves as cofactor.

The protein localises to the cytoplasm. It catalyses the reaction (3S,5S)-carbapenam-3-caboxylate + 2-oxoglutarate + O2 = (5R)-carbapenem-3-carboxylate + succinate + CO2 + H2O. With respect to regulation, inhibited by L-N-acetylproline and by D-N-acetylproline. Functionally, catalyzes the Fe(2+) and alpha-ketoglutarate-dependent conversion of (3S,5S)-carbapenam to (5R)-carbapenem, an essential step in carbapenem antibiotic biosynthesis. The sequence is that of (5R)-carbapenem-3-carboxylate synthase (carC) from Pectobacterium carotovorum subsp. carotovorum (Erwinia carotovora subsp. carotovora).